Consider the following 183-residue polypeptide: Small ribosomal subunit protein cS23y (183 aa).

It belongs to the chloroplast-specific ribosomal protein cS23 family. Part of the 30S ribosomal subunit.

The protein resides in the plastid. The protein localises to the chloroplast. Its function is as follows. Component of the chloroplast ribosome (chloro-ribosome), a dedicated translation machinery responsible for the synthesis of chloroplast genome-encoded proteins, including proteins of the transcription and translation machinery and components of the photosynthetic apparatus. This is Small ribosomal subunit protein cS23y from Arabidopsis thaliana (Mouse-ear cress).